A 242-amino-acid chain; its full sequence is ATP synthase subunit a (242 aa).

Helical transmembrane passes span 23–43, 62–82, 84–104, 113–133, 143–163, 176–196, and 201–221; these read ISFT…AVLL, VELI…VGGL, YIPF…IGIL, HVSV…VLGF, IFLP…IKLF, LAAN…FVLK, and LAPL…FVAI.

It belongs to the ATPase A chain family. F-type ATPases have 2 components, CF(1) - the catalytic core - and CF(0) - the membrane proton channel. CF(1) has five subunits: alpha(3), beta(3), gamma(1), delta(1), epsilon(1). CF(0) has three main subunits: a(1), b(2) and c(9-12). The alpha and beta chains form an alternating ring which encloses part of the gamma chain. CF(1) is attached to CF(0) by a central stalk formed by the gamma and epsilon chains, while a peripheral stalk is formed by the delta and b chains.

It localises to the cell inner membrane. In terms of biological role, key component of the proton channel; it plays a direct role in the translocation of protons across the membrane. The protein is ATP synthase subunit a of Anaplasma phagocytophilum (strain HZ).